We begin with the raw amino-acid sequence, 125 residues long: DCPWDWSSHEGHCYKVFKLRKTWEDAEKFCTEQARGGHLISLKSTEEVDFMIKLAYPILKANLVWIGLRDFWRDCHMGWRDHANLLYKAWSDEPNCFVAKTTDNQWFRRKCNISQYFVCQSRVPR.

Disulfide bonds link C2–C13, C30–C119, and C96–C111. In terms of domain architecture, C-type lectin spans 9–120; that stretch reads HEGHCYKVFK…CNISQYFVCQ (112 aa). Residue N112 is glycosylated (N-linked (GlcNAc...) asparagine).

The protein belongs to the snaclec family. Heterodimer; disulfide-linked. In terms of tissue distribution, expressed by the venom gland.

The protein resides in the secreted. In terms of biological role, interferes with one step of hemostasis (modulation of platelet aggregation, or coagulation cascade, for example). The protein is Snaclec B7 of Macrovipera lebetinus (Levantine viper).